The following is a 269-amino-acid chain: Shikimate dehydrogenase (NADP(+)) (269 aa).

Residues 17-19 (SKS) and Thr-64 each bind shikimate. The active-site Proton acceptor is the Lys-68. Glu-80 is an NADP(+) binding site. 2 residues coordinate shikimate: Asn-89 and Asp-105. Residues 130 to 134 (GAGGA), 154 to 159 (NRTHAK), and Met-213 contribute to the NADP(+) site. Shikimate is bound at residue Tyr-215. Gly-237 lines the NADP(+) pocket.

The protein belongs to the shikimate dehydrogenase family. As to quaternary structure, homodimer.

It catalyses the reaction shikimate + NADP(+) = 3-dehydroshikimate + NADPH + H(+). It functions in the pathway metabolic intermediate biosynthesis; chorismate biosynthesis; chorismate from D-erythrose 4-phosphate and phosphoenolpyruvate: step 4/7. Functionally, involved in the biosynthesis of the chorismate, which leads to the biosynthesis of aromatic amino acids. Catalyzes the reversible NADPH linked reduction of 3-dehydroshikimate (DHSA) to yield shikimate (SA). This Neisseria flavescens protein is Shikimate dehydrogenase (NADP(+)).